We begin with the raw amino-acid sequence, 404 residues long: Cysteine desulfurase IscS (404 aa).

Residues 75 to 76 (AT), Asn-155, Gln-183, and 203 to 205 (SAH) contribute to the pyridoxal 5'-phosphate site. Residue Lys-206 is modified to N6-(pyridoxal phosphate)lysine. Thr-243 lines the pyridoxal 5'-phosphate pocket. The Cysteine persulfide intermediate role is filled by Cys-328. Cys-328 serves as a coordination point for [2Fe-2S] cluster.

It belongs to the class-V pyridoxal-phosphate-dependent aminotransferase family. NifS/IscS subfamily. As to quaternary structure, homodimer. Forms a heterotetramer with IscU, interacts with other sulfur acceptors. The cofactor is pyridoxal 5'-phosphate.

It is found in the cytoplasm. It catalyses the reaction (sulfur carrier)-H + L-cysteine = (sulfur carrier)-SH + L-alanine. The protein operates within cofactor biosynthesis; iron-sulfur cluster biosynthesis. Master enzyme that delivers sulfur to a number of partners involved in Fe-S cluster assembly, tRNA modification or cofactor biosynthesis. Catalyzes the removal of elemental sulfur atoms from cysteine to produce alanine. Functions as a sulfur delivery protein for Fe-S cluster synthesis onto IscU, an Fe-S scaffold assembly protein, as well as other S acceptor proteins. The chain is Cysteine desulfurase IscS from Ruthia magnifica subsp. Calyptogena magnifica.